The primary structure comprises 968 residues: Translation initiation factor IF-2 (968 aa).

A compositionally biased stretch (low complexity) spans 305–319 (KPAAAAGAPGAPGAA). Residues 305 to 376 (KPAAAAGAPG…NDRDARPEST (72 aa)) are disordered. One can recognise a tr-type G domain in the interval 468-635 (PRAPVVTVMG…QVLLQAEVLE (168 aa)). The interval 477–484 (GHVDHGKT) is G1. GTP is bound at residue 477-484 (GHVDHGKT). The tract at residues 502–506 (GITQH) is G2. Residues 523–526 (DTPG) form a G3 region. GTP contacts are provided by residues 523-527 (DTPGH) and 577-580 (NKID). A G4 region spans residues 577 to 580 (NKID). Residues 613–615 (SAR) form a G5 region.

Belongs to the TRAFAC class translation factor GTPase superfamily. Classic translation factor GTPase family. IF-2 subfamily.

The protein resides in the cytoplasm. Functionally, one of the essential components for the initiation of protein synthesis. Protects formylmethionyl-tRNA from spontaneous hydrolysis and promotes its binding to the 30S ribosomal subunits. Also involved in the hydrolysis of GTP during the formation of the 70S ribosomal complex. This is Translation initiation factor IF-2 from Polaromonas sp. (strain JS666 / ATCC BAA-500).